A 502-amino-acid polypeptide reads, in one-letter code: Lysine--tRNA ligase (502 aa).

The Mg(2+) site is built by E398 and E405.

It belongs to the class-II aminoacyl-tRNA synthetase family. Homodimer. Mg(2+) serves as cofactor.

It localises to the cytoplasm. The enzyme catalyses tRNA(Lys) + L-lysine + ATP = L-lysyl-tRNA(Lys) + AMP + diphosphate. In Thermosipho africanus (strain TCF52B), this protein is Lysine--tRNA ligase.